Reading from the N-terminus, the 831-residue chain is SID1 transmembrane family member 1 (831 aa).

An N-terminal signal peptide occupies residues 1–19; the sequence is MLDCPRLALLCALPWLLRA. Over 20 to 308 the chain is Extracellular; that stretch reads AVPGHRAEPL…SVKGSVYVKS (289 aa). Asn67, Asn83, Asn136, and Asn281 each carry an N-linked (GlcNAc...) asparagine glycan. The helical transmembrane segment at 309–329 threads the bilayer; that stretch reads SLFSVFVFLSFYLGCLLVVFV. Topologically, residues 330-441 are cytoplasmic; the sequence is HHMRFQRKPV…DRRIVSKKYK (112 aa). Residues 354-408 form a disordered region; the sequence is VSHPITASTPEGSNYGAIDESSSSPGRQMSSSDGGQPCHSDTDSSVEESDFDTMP. Residues 374-385 show a composition bias toward low complexity; that stretch reads SSSSPGRQMSSS. The span at 397–408 shows a compositional bias: acidic residues; it reads SSVEESDFDTMP. A helical membrane pass occupies residues 442 to 462; the sequence is IYFWNIITIAVFYALPVMQLV. At 463 to 493 the chain is on the extracellular side; it reads ITYQTVVNVTGNQDICYYNFLCAHPLGVLSA. N-linked (GlcNAc...) asparagine glycosylation occurs at Asn470. A helical transmembrane segment spans residues 494–514; it reads FNNILSNLGHVLLGFLFLLIV. Residues 515–540 are Cytoplasmic-facing; that stretch reads LRRDLLHRRALEAKDIFAMEYGIPKH. A helical transmembrane segment spans residues 541 to 561; that stretch reads FGLFYAMGIALMMEGVLSACY. At 562–571 the chain is on the extracellular side; sequence HVCPNYSNFQ. Asn566 is a glycosylation site (N-linked (GlcNAc...) asparagine). Residues 572–589 traverse the membrane as a helical segment; that stretch reads FDTSFMYMIAGLCMLKLY. The Cytoplasmic segment spans residues 590 to 599; that stretch reads QTRHPDINAS. The helical transmembrane segment at 600-620 threads the bilayer; it reads AYSAYASFAVVITLTVLGVVF. Residues 621 to 625 are Extracellular-facing; it reads GKNDV. Residues 626–646 traverse the membrane as a helical segment; that stretch reads WFWIIFSAIHVLASLALSTQI. At 647–687 the chain is on the cytoplasmic side; it reads YYMGRFKIDVSDTDLGIFRRAAMVFYTDCIQQCSRPLYMDR. Residues 688–708 traverse the membrane as a helical segment; it reads MVLLIVGNLVNWSFALFGLIY. Residues 709 to 714 lie on the Extracellular side of the membrane; sequence RPRDFA. A helical membrane pass occupies residues 715–735; sequence SYMLGIFICNLLLYLAFYIIM. Over 736–745 the chain is Cytoplasmic; it reads KLRSSEKVLP. Residues 746-766 form a helical membrane-spanning segment; the sequence is LPVFCIVATAVVWAAALYFFF. The Extracellular portion of the chain corresponds to 767–795; it reads QNLSSWEGTPAESREKNRECVLLGFFDDH. Asn768 carries an N-linked (GlcNAc...) asparagine glycan. A helical transmembrane segment spans residues 796–816; that stretch reads DIWHFLSATALFFSFLVLLTL. The Cytoplasmic portion of the chain corresponds to 817-831; the sequence is DDDLDVVRRDQIPVF.

This sequence belongs to the SID1 family.

The protein resides in the membrane. In vitro binds long double-stranded RNA (dsRNA) (500 and 700 base pairs), but not dsRNA shorter than 300 bp. Not involved in RNA autophagy, a process in which RNA is directly imported into lysosomes in an ATP-dependent manner, and degraded. This Rattus norvegicus (Rat) protein is SID1 transmembrane family member 1 (Sidt1).